Consider the following 741-residue polypeptide: 1,4-alpha-glucan branching enzyme GlgB (741 aa).

Aspartate 420 functions as the Nucleophile in the catalytic mechanism. Catalysis depends on glutamate 473, which acts as the Proton donor.

Belongs to the glycosyl hydrolase 13 family. GlgB subfamily. Monomer.

The enzyme catalyses Transfers a segment of a (1-&gt;4)-alpha-D-glucan chain to a primary hydroxy group in a similar glucan chain.. Its pathway is glycan biosynthesis; glycogen biosynthesis. Catalyzes the formation of the alpha-1,6-glucosidic linkages in glycogen by scission of a 1,4-alpha-linked oligosaccharide from growing alpha-1,4-glucan chains and the subsequent attachment of the oligosaccharide to the alpha-1,6 position. This is 1,4-alpha-glucan branching enzyme GlgB from Pseudomonas syringae pv. syringae (strain B728a).